A 134-amino-acid polypeptide reads, in one-letter code: Acyl carrier protein, chloroplastic (134 aa).

A chloroplast-targeting transit peptide spans 1-51; it reads MATTFSASVSMQATSLATTTRISFQKPVLVSNHGRTNLSFNLSRTRLSISC. The 76-residue stretch at 55 to 130 folds into the Carrier domain; that stretch reads QETVEKVSEI…QAAELIEELM (76 aa). Position 90 is an O-(pantetheine 4'-phosphoryl)serine (serine 90).

It belongs to the acyl carrier protein (ACP) family. In terms of processing, 4'-phosphopantetheine is transferred from CoA to a specific serine of apo-ACP by acpS. This modification is essential for activity because fatty acids are bound in thioester linkage to the sulfhydryl of the prosthetic group. As to expression, seed.

The protein resides in the plastid. It localises to the chloroplast. It participates in lipid metabolism; fatty acid biosynthesis. Carrier of the growing fatty acid chain in fatty acid biosynthesis. The sequence is that of Acyl carrier protein, chloroplastic (ACL1.C1) from Brassica napus (Rape).